Reading from the N-terminus, the 191-residue chain is Clusterin (191 aa).

N-linked (GlcNAc...) asparagine glycans are attached at residues N79, N116, N142, and N162. S184 carries the phosphoserine modification.

Belongs to the clusterin family. As to quaternary structure, antiparallel disulfide-linked heterodimer of an alpha chain and a beta chain. Self-associates and forms higher oligomers. Interacts with a broad range of misfolded proteins, including APP, APOC2 and LYZ. Slightly acidic pH promotes interaction with misfolded proteins. Forms high-molecular weight oligomers upon interaction with misfolded proteins. Interacts with APOA1, LRP2, CLUAP1 and PON1. Interacts with the complement membrane attack complex. Interacts (via alpha chain) with XRCC6. Interacts with SYVN1, COMMD1, BTRC, CUL1 and with ubiquitin and SCF (SKP1-CUL1-F-box protein) E3 ubiquitin-protein ligase complexes. Interacts (via alpha chain) with BAX in stressed cells, where BAX undergoes a conformation change leading to association with the mitochondrial membrane. Does not interact with BAX in unstressed cells. Found in a complex with LTF, CLU, EPPIN and SEMG1. Interacts (immaturely glycosylated pre-secreted form) with HSPA5; this interaction promotes CLU stability and facilitates stress-induced CLU retrotranslocation from the secretory pathway to the mitochondria, thereby reducing stress-induced apoptosis by stabilizing mitochondrial membrane integrity. Interacts with BCL2L1; this interaction releases and activates BAX and promotes cell death. Interacts with TGFBR2 and ACVR1. Interacts (secreted form) with STMN3; this interaction may act as an important modulator during neuronal differentiation. Proteolytically cleaved on its way through the secretory system, probably within the Golgi lumen. Proteolytic cleavage is not necessary for its chaperone activity. All non-secreted forms are not proteolytically cleaved. Chaperone activity of uncleaved forms is dependent on a non-reducing environment. In terms of processing, polyubiquitinated, leading to proteasomal degradation. Under cellular stress, the intracellular level of cleaved form is reduced due to proteasomal degradation. Post-translationally, heavily N-glycosylated. About 30% of the protein mass is comprised of complex N-linked carbohydrate. Endoplasmic reticulum (ER) stress induces changes in glycosylation status and increases level of hypoglycosylated forms. Core carbohydrates are essential for chaperone activity. Non-secreted forms are hypoglycosylated or unglycosylated.

Its subcellular location is the secreted. It is found in the nucleus. It localises to the cytoplasm. The protein resides in the mitochondrion membrane. The protein localises to the cytosol. Its subcellular location is the microsome. It is found in the endoplasmic reticulum. It localises to the mitochondrion. The protein resides in the perinuclear region. The protein localises to the cytoplasmic vesicle. Its subcellular location is the secretory vesicle. It is found in the chromaffin granule. Functionally, functions as extracellular chaperone that prevents aggregation of non native proteins. Prevents stress-induced aggregation of blood plasma proteins. Inhibits formation of amyloid fibrils by APP, APOC2, B2M, CALCA, CSN3, SNCA and aggregation-prone LYZ variants (in vitro). Does not require ATP. Maintains partially unfolded proteins in a state appropriate for subsequent refolding by other chaperones, such as HSPA8/HSC70. Does not refold proteins by itself. Binding to cell surface receptors triggers internalization of the chaperone-client complex and subsequent lysosomal or proteasomal degradation. When secreted, protects cells against apoptosis and against cytolysis by complement: inhibits assembly of the complement membrane attack complex (MAC) by preventing polymerization of C9 pore component of the MAC complex. Intracellular forms interact with ubiquitin and SCF (SKP1-CUL1-F-box protein) E3 ubiquitin-protein ligase complexes and promote the ubiquitination and subsequent proteasomal degradation of target proteins. Promotes proteasomal degradation of COMMD1 and IKBKB. Modulates NF-kappa-B transcriptional activity. Following stress, promotes apoptosis. Inhibits apoptosis when associated with the mitochondrial membrane by interference with BAX-dependent release of cytochrome c into the cytoplasm. Plays a role in the regulation of cell proliferation. An intracellular form suppresses stress-induced apoptosis by stabilizing mitochondrial membrane integrity through interaction with HSPA5. Secreted form does not affect caspase or BAX-mediated intrinsic apoptosis and TNF-induced NF-kappa-B-activity. Secreted form act as an important modulator during neuronal differentiation through interaction with STMN3. Plays a role in the clearance of immune complexes that arise during cell injury. This Mesocricetus auratus (Golden hamster) protein is Clusterin.